The chain runs to 320 residues: ADP-L-glycero-D-manno-heptose-6-epimerase (320 aa).

NADP(+) contacts are provided by residues 10-11 (FI), 31-32 (DN), K38, K53, 75-79 (LGACS), and N92. Y139 functions as the Proton acceptor in the catalytic mechanism. K143 contributes to the NADP(+) binding site. N168 serves as a coordination point for substrate. The NADP(+) site is built by V169 and K177. The active-site Proton acceptor is the K177. Substrate is bound by residues G179, H186, 200 to 203 (FEGS), R213, and Y277.

It belongs to the NAD(P)-dependent epimerase/dehydratase family. HldD subfamily. Homopentamer. The cofactor is NADP(+).

It carries out the reaction ADP-D-glycero-beta-D-manno-heptose = ADP-L-glycero-beta-D-manno-heptose. It participates in nucleotide-sugar biosynthesis; ADP-L-glycero-beta-D-manno-heptose biosynthesis; ADP-L-glycero-beta-D-manno-heptose from D-glycero-beta-D-manno-heptose 7-phosphate: step 4/4. Catalyzes the interconversion between ADP-D-glycero-beta-D-manno-heptose and ADP-L-glycero-beta-D-manno-heptose via an epimerization at carbon 6 of the heptose. The sequence is that of ADP-L-glycero-D-manno-heptose-6-epimerase from Alkalilimnicola ehrlichii (strain ATCC BAA-1101 / DSM 17681 / MLHE-1).